Here is a 73-residue protein sequence, read N- to C-terminus: MIVKVKVKPNAKKEEIREIQKDYFEIRVTVPPEKGKANSRVIELLSKHLKIPKSRIKLKKGEKSREKIFEIID.

This sequence belongs to the UPF0235 family.

This is UPF0235 protein PERMA_1406 from Persephonella marina (strain DSM 14350 / EX-H1).